A 374-amino-acid polypeptide reads, in one-letter code: MKIRLHTLLAVLTAAPLLLAAAGCGSKPPSGSPETGAGAGTVATTPASSPVTLAETGSTLLYPLFNLWGPAFHERYPNVTITAQGTGSGAGIAQAAAGTVNIGASDAYLSEGDMAAHKGLMNIALAISAQQVNYNLPGVSEHLKLNGKVLAAMYQGTIKTWDDPQIAALNPGVNLPGTAVVPLHRSDGSGDTFLFTQYLSKQDPEGWGKSPGFGTTVDFPAVPGALGENGNGGMVTGCAETPGCVAYIGISFLDQASQRGLGEAQLGNSSGNFLLPDAQSIQAAAAGFASKTPANQAISMIDGPAPDGYPIINYEYAIVNNRQKDAATAQTLQAFLHWAITDGNKASFLDQVHFQPLPPAVVKLSDALIATISS.

An N-terminal signal peptide occupies residues Met-1–Gly-23. Cys-24 carries the N-palmitoyl cysteine lipid modification. A lipid anchor (S-diacylglycerol cysteine) is attached at Cys-24. Residues Gly-25 to Ser-48 are disordered. Residues Ser-58–Leu-60, Ser-88, Asp-106, and Ser-189–Asp-191 contribute to the phosphate site.

It belongs to the PstS family. In terms of assembly, the complex is composed of two ATP-binding proteins (PstB), two transmembrane proteins (PstC and PstA) and a solute-binding protein (PstS).

It localises to the cell membrane. Its function is as follows. Part of the ABC transporter complex PstSACB involved in phosphate import. This Mycobacterium tuberculosis (strain CDC 1551 / Oshkosh) protein is Phosphate-binding protein PstS 1 (pstS1).